The chain runs to 189 residues: uncharacterized protein (189 aa).

Residues 1 to 23 (MIKTTPHKIVILMGILLSPSVFA) form the signal peptide. The disordered stretch occupies residues 104-125 (SSPKLIIPQSGDSSSTTSNIGM). Over residues 113–123 (SGDSSSTTSNI) the composition is skewed to polar residues.

The protein belongs to the fimbrial protein family.

It is found in the fimbrium. Part of the yadCKLM-htrE-yadVN fimbrial operon. Could contribute to adhesion to various surfaces in specific environmental niches. This is an uncharacterized protein from Escherichia coli (strain K12).